Reading from the N-terminus, the 386-residue chain is MDQVQHPSVMQKVAGQLFRSSHSQDFQGYNGSFRSPALYQRRAAYGNYSNAALQHPVRAFGDLSMVPSTASAICVQAPAEKGFSSFAIDFLMGGVSAAVSKTAAAPIERVKLLIQNQDEMIKSGRLSEPYKGIGDCFKRTIKDEGFGSLWRGNTANVIRYFPTQALNFAFKDYFKRLFNFKKDRDGYWKWFAGNLASGGAAGASSLLFVYSLDYARTRLANDAKAAKKGGERQFNGLVDVYRKTLKSDGIAGLYRGFNISCVGIIVYRGLYFGMYDSLKPVLLTGSMQDSFFASFVLGWLITNGAALASYPIDTVRRRMMMTSGKAVKYKSSLDAFSQILKNEGGKSLFKGAGSNILRAIAGAGVLAGYDKLQLIVFGKKYGSGGA.

The N-terminal 76 residues, 1–76 (MDQVQHPSVM…PSTASAICVQ (76 aa)), are a transit peptide targeting the mitochondrion. 3 Solcar repeats span residues 84 to 177 (SSFA…FKRL), 189 to 281 (KWFA…LKPV), and 289 to 375 (DSFF…LQLI). The next 5 membrane-spanning stretches (helical) occupy residues 86-113 (FAID…VKLL), 154-178 (TANV…KRLF), 187-207 (YWKW…SSLL), 257-278 (FNIS…YDSL), and 292-312 (FASF…SYPI). Arg159 and Lys171 together coordinate ADP. Residue Arg316 coordinates ADP. The interval 316 to 321 (RRRMMM) is important for transport activity. The Nucleotide carrier signature motif motif lies at 316-321 (RRRMMM). A helical membrane pass occupies residues 352 to 372 (AGSNILRAIAGAGVLAGYDKL).

The protein belongs to the mitochondrial carrier (TC 2.A.29) family. As to quaternary structure, monomer.

The protein resides in the mitochondrion inner membrane. The enzyme catalyses ADP(in) + ATP(out) = ADP(out) + ATP(in). Its activity is regulated as follows. The matrix-open state (m-state) is inhibited by the membrane-permeable bongkrekic acid (BKA). The cytoplasmic-open state (c-state) is inhibited by the membrane-impermeable toxic inhibitor carboxyatractyloside (CATR). Functionally, ADP:ATP antiporter that mediates import of ADP into the mitochondrial matrix for ATP synthesis, and export of ATP out to fuel the cell. Cycles between the cytoplasmic-open state (c-state) and the matrix-open state (m-state): operates by the alternating access mechanism with a single substrate-binding site intermittently exposed to either the cytosolic (c-state) or matrix (m-state) side of the inner mitochondrial membrane. The protein is ADP,ATP carrier protein 1, mitochondrial (ANT1) of Gossypium hirsutum (Upland cotton).